A 164-amino-acid chain; its full sequence is Protein CURVATURE THYLAKOID 1A, chloroplastic (164 aa).

A chloroplast-targeting transit peptide spans 1–62 (MAISVAASSS…LQKVELLKTR (62 aa)). N-acetylalanine is present on A63. The Stromal portion of the chain corresponds to 63-93 (ASSEETSSIDTNELITDLKEKWDGLENKSTV). The chain crosses the membrane as a helical span at residues 94-114 (LIYGGGAIVAVWLSSIVVGAI). The Lumenal portion of the chain corresponds to 115–116 (NS). A helical transmembrane segment spans residues 117–137 (VPLLPKVMELVGLGYTGWFVY). The Stromal segment spans residues 138 to 164 (RYLLFKSSRKELAEDIESLKKKIAGSE). Positions 140-164 (LLFKSSRKELAEDIESLKKKIAGSE) form a coiled coil.

The protein belongs to the CURT family. As to quaternary structure, homo- and heterodimers and trimers.

The protein resides in the plastid. Its subcellular location is the chloroplast. It localises to the plastoglobule. It is found in the membrane. The protein localises to the chloroplast thylakoid membrane. Functionally, determines thylakoid architecture by inducing membrane curvature. This is Protein CURVATURE THYLAKOID 1A, chloroplastic (CURT1A) from Arabidopsis thaliana (Mouse-ear cress).